The following is a 998-amino-acid chain: Probable protein kinase DDB_G0277539 (998 aa).

6 disordered regions span residues methionine 1–glutamine 34, cysteine 65–phenylalanine 207, isoleucine 265–serine 284, serine 316–serine 367, glutamate 380–isoleucine 420, and arginine 435–asparagine 489. Acidic residues predominate over residues tyrosine 23–phenylalanine 32. Low complexity predominate over residues glutamine 70 to asparagine 139. A compositionally biased stretch (basic residues) spans serine 140–arginine 150. The span at alanine 166 to proline 177 shows a compositional bias: polar residues. Composition is skewed to low complexity over residues serine 184–glutamine 203 and isoleucine 265–asparagine 274. Polar residues predominate over residues serine 316–serine 328. Residues glutamate 330–alanine 340 are compositionally biased toward basic and acidic residues. 2 stretches are compositionally biased toward low complexity: residues asparagine 393–asparagine 415 and asparagine 450–asparagine 489. Residues phenylalanine 508 to isoleucine 849 enclose the Protein kinase domain. ATP is bound by residues isoleucine 514–valine 522 and lysine 537. Aspartate 631 acts as the Proton acceptor in catalysis. Mg(2+) is bound by residues asparagine 636 and glutamate 677.

It belongs to the protein kinase superfamily. Ser/Thr protein kinase family. WEE1 subfamily.

It carries out the reaction L-seryl-[protein] + ATP = O-phospho-L-seryl-[protein] + ADP + H(+). It catalyses the reaction L-threonyl-[protein] + ATP = O-phospho-L-threonyl-[protein] + ADP + H(+). The chain is Probable protein kinase DDB_G0277539 from Dictyostelium discoideum (Social amoeba).